Reading from the N-terminus, the 85-residue chain is Kunitz-type serine protease inhibitor homolog beta-bungarotoxin B2 chain (85 aa).

The first 24 residues, 1-24 (MSSGGLLLLLGLLTLCAELTPVSS), serve as a signal peptide directing secretion. Positions 31 to 81 (CDKPPDTKICQTVVRAFYYKPSAKRCVQFRYGGCNGNGNHFKSDHLCRCEC) constitute a BPTI/Kunitz inhibitor domain. 3 disulfides stabilise this stretch: Cys-31/Cys-81, Cys-40/Cys-64, and Cys-56/Cys-77.

This sequence belongs to the venom Kunitz-type family. In terms of assembly, heterodimer; disulfide-linked. The A chains have phospholipase A2 activity and the B chains show homology with the basic protease inhibitors. Expressed by the venom gland.

It is found in the secreted. Its function is as follows. Beta-2-bungarotoxin is a presynaptic neurotoxin of the venom. The B chain is homologous to venom basic protease inhibitors but has no protease inhibitor activity and blocks voltage-gated potassium channels (Kv). In Bungarus multicinctus (Many-banded krait), this protein is Kunitz-type serine protease inhibitor homolog beta-bungarotoxin B2 chain.